The sequence spans 145 residues: Deoxyuridine 5'-triphosphate nucleotidohydrolase (145 aa).

Residues 65–67 (RSG), N78, 82–84 (TID), and M92 each bind substrate.

The protein belongs to the dUTPase family. Mg(2+) is required as a cofactor.

It carries out the reaction dUTP + H2O = dUMP + diphosphate + H(+). It participates in pyrimidine metabolism; dUMP biosynthesis; dUMP from dCTP (dUTP route): step 2/2. In terms of biological role, this enzyme is involved in nucleotide metabolism: it produces dUMP, the immediate precursor of thymidine nucleotides and it decreases the intracellular concentration of dUTP so that uracil cannot be incorporated into DNA. This Chlorobium phaeobacteroides (strain BS1) protein is Deoxyuridine 5'-triphosphate nucleotidohydrolase.